A 104-amino-acid polypeptide reads, in one-letter code: U20-lycotoxin-Ls1d (104 aa).

Positions 1 to 30 are cleaved as a signal peptide; the sequence is MFSTSDQVSKMNSRILSALLILGIATCVIA. One can recognise a WAP domain in the interval 31–76; sequence GGFCPKSRHPQCNLSYKINDCCAQSDCRVGSVCCVEGCGNVCRAES. Intrachain disulfides connect cysteine 34-cysteine 64, cysteine 42-cysteine 68, cysteine 51-cysteine 63, cysteine 52-cysteine 90, and cysteine 57-cysteine 72.

Belongs to the venom protein 11 family. 02 (wap-2) subfamily. Contains 5 disulfide bonds. As to expression, expressed by the venom gland.

The protein localises to the secreted. Functionally, has antibacterial activity. In Lycosa singoriensis (Wolf spider), this protein is U20-lycotoxin-Ls1d.